Consider the following 425-residue polypeptide: MQYSSKKNSYEDQNFQNRFFNSLNGQNKSSLNQNSSFSESSKQQVVSITYEEIGLFPRSFNRVFDRFFKQLFFDVENLVIQEYRFYRYLFLTTVKCLFILLFVPLGINFLSKNYLIRPVTEYYWNTHNHEIFLNSYQQKRAFTELKNFEEKIYFESLLLSENQIFFGLSEKNSTFPSSEKSQKSEHFSNQDEHTNDFYGKPKKFQTDSSLQQKNEEKVFLFENSKSLAFEPNLNQIHSSGFLIASADFSKNEVQNFQNLNLSNNTSQSKTDFASVFRTSVQKRLQVKILELAKHYNEESIEAITNFFADVLSFITLCYLLVRLEIQINITKSFLLEVFFGLDDSKKSLLILFITDLLVGYHSPNIWELFFQTLFDHYGLPESQTTIFLLVATLPVLLDVLFKYLIFRHLNRASPATVATYHAMIE.

A helical membrane pass occupies residues 89-109 (LFLTTVKCLFILLFVPLGINF). An insert region spans residues 159–278 (LSENQIFFGL…KTDFASVFRT (120 aa)). Positions 173–192 (STFPSSEKSQKSEHFSNQDE) are disordered. Positions 180–192 (KSQKSEHFSNQDE) are enriched in basic and acidic residues. 3 helical membrane-spanning segments follow: residues 300 to 320 (IEAI…CYLL), 350 to 370 (ILFI…ELFF), and 386 to 406 (IFLL…YLIF).

It belongs to the CemA family.

Its subcellular location is the plastid. It is found in the chloroplast inner membrane. It carries out the reaction K(+)(in) + H(+)(out) = K(+)(out) + H(+)(in). Functionally, contributes to K(+)/H(+) antiport activity by supporting proton efflux to control proton extrusion and homeostasis in chloroplasts in a light-dependent manner to modulate photosynthesis. Prevents excessive induction of non-photochemical quenching (NPQ) under continuous-light conditions. Indirectly promotes efficient inorganic carbon uptake into chloroplasts. The protein is Potassium/proton antiporter CemA of Tetradesmus obliquus (Green alga).